The chain runs to 388 residues: Succinate--CoA ligase [ADP-forming] subunit beta (388 aa).

The ATP-grasp domain maps to 9-244 (KALFAEYGLP…PSQDDAREAH (236 aa)). ATP contacts are provided by residues Lys46, 53-55 (GRG), Glu99, Thr102, and Glu107. Asn199 and Asp213 together coordinate Mg(2+). Substrate is bound by residues Asn264 and 321–323 (GIV).

This sequence belongs to the succinate/malate CoA ligase beta subunit family. Heterotetramer of two alpha and two beta subunits. Mg(2+) is required as a cofactor.

It catalyses the reaction succinate + ATP + CoA = succinyl-CoA + ADP + phosphate. The catalysed reaction is GTP + succinate + CoA = succinyl-CoA + GDP + phosphate. It functions in the pathway carbohydrate metabolism; tricarboxylic acid cycle; succinate from succinyl-CoA (ligase route): step 1/1. Functionally, succinyl-CoA synthetase functions in the citric acid cycle (TCA), coupling the hydrolysis of succinyl-CoA to the synthesis of either ATP or GTP and thus represents the only step of substrate-level phosphorylation in the TCA. The beta subunit provides nucleotide specificity of the enzyme and binds the substrate succinate, while the binding sites for coenzyme A and phosphate are found in the alpha subunit. The protein is Succinate--CoA ligase [ADP-forming] subunit beta of Shewanella amazonensis (strain ATCC BAA-1098 / SB2B).